We begin with the raw amino-acid sequence, 453 residues long: Bifunctional protein GlmU (453 aa).

The tract at residues 1–227 (MTQLSVVILA…LMEVEGANNR (227 aa)) is pyrophosphorylase. UDP-N-acetyl-alpha-D-glucosamine-binding positions include 9-12 (LAAG), Lys23, Gln74, 79-80 (GT), 101-103 (YGD), Gly138, Glu152, Asn167, and Asn225. Residue Asp103 participates in Mg(2+) binding. Asn225 is a binding site for Mg(2+). The interval 228–248 (LQLAALERYYQKIQAEKLLLA) is linker. Residues 249–453 (GVTIIDPARF…IQGWQRPTKK (205 aa)) form an N-acetyltransferase region. The UDP-N-acetyl-alpha-D-glucosamine site is built by Arg331 and Lys349. The active-site Proton acceptor is the His361. The UDP-N-acetyl-alpha-D-glucosamine site is built by Tyr364 and Asn375. Acetyl-CoA-binding positions include Ala378, 384–385 (NY), Ser403, Ala421, and Arg438.

In the N-terminal section; belongs to the N-acetylglucosamine-1-phosphate uridyltransferase family. The protein in the C-terminal section; belongs to the transferase hexapeptide repeat family. As to quaternary structure, homotrimer. Mg(2+) serves as cofactor.

It is found in the cytoplasm. It carries out the reaction alpha-D-glucosamine 1-phosphate + acetyl-CoA = N-acetyl-alpha-D-glucosamine 1-phosphate + CoA + H(+). It catalyses the reaction N-acetyl-alpha-D-glucosamine 1-phosphate + UTP + H(+) = UDP-N-acetyl-alpha-D-glucosamine + diphosphate. The protein operates within nucleotide-sugar biosynthesis; UDP-N-acetyl-alpha-D-glucosamine biosynthesis; N-acetyl-alpha-D-glucosamine 1-phosphate from alpha-D-glucosamine 6-phosphate (route II): step 2/2. It functions in the pathway nucleotide-sugar biosynthesis; UDP-N-acetyl-alpha-D-glucosamine biosynthesis; UDP-N-acetyl-alpha-D-glucosamine from N-acetyl-alpha-D-glucosamine 1-phosphate: step 1/1. It participates in bacterial outer membrane biogenesis; LPS lipid A biosynthesis. Its function is as follows. Catalyzes the last two sequential reactions in the de novo biosynthetic pathway for UDP-N-acetylglucosamine (UDP-GlcNAc). The C-terminal domain catalyzes the transfer of acetyl group from acetyl coenzyme A to glucosamine-1-phosphate (GlcN-1-P) to produce N-acetylglucosamine-1-phosphate (GlcNAc-1-P), which is converted into UDP-GlcNAc by the transfer of uridine 5-monophosphate (from uridine 5-triphosphate), a reaction catalyzed by the N-terminal domain. In Glaesserella parasuis serovar 5 (strain SH0165) (Haemophilus parasuis), this protein is Bifunctional protein GlmU.